The primary structure comprises 388 residues: Succinyl-diaminopimelate desuccinylase (388 aa).

H71 serves as a coordination point for Zn(2+). Residue D73 is part of the active site. D104 contributes to the Zn(2+) binding site. Residue E143 is the Proton acceptor of the active site. Zn(2+)-binding residues include E144, E172, and H361.

Belongs to the peptidase M20A family. DapE subfamily. In terms of assembly, homodimer. Zn(2+) serves as cofactor. Co(2+) is required as a cofactor.

It catalyses the reaction N-succinyl-(2S,6S)-2,6-diaminopimelate + H2O = (2S,6S)-2,6-diaminopimelate + succinate. Its pathway is amino-acid biosynthesis; L-lysine biosynthesis via DAP pathway; LL-2,6-diaminopimelate from (S)-tetrahydrodipicolinate (succinylase route): step 3/3. Catalyzes the hydrolysis of N-succinyl-L,L-diaminopimelic acid (SDAP), forming succinate and LL-2,6-diaminopimelate (DAP), an intermediate involved in the bacterial biosynthesis of lysine and meso-diaminopimelic acid, an essential component of bacterial cell walls. This Bradyrhizobium diazoefficiens (strain JCM 10833 / BCRC 13528 / IAM 13628 / NBRC 14792 / USDA 110) protein is Succinyl-diaminopimelate desuccinylase.